A 447-amino-acid chain; its full sequence is UDP-N-acetylglucosamine 1-carboxyvinyltransferase (447 aa).

K27–N28 is a binding site for phosphoenolpyruvate. Position 97 (R97) interacts with UDP-N-acetyl-alpha-D-glucosamine. The Proton donor role is filled by C121. The residue at position 121 (C121) is a 2-(S-cysteinyl)pyruvic acid O-phosphothioketal. UDP-N-acetyl-alpha-D-glucosamine is bound by residues R126–L130, D314, and V336.

The protein belongs to the EPSP synthase family. MurA subfamily.

Its subcellular location is the cytoplasm. It carries out the reaction phosphoenolpyruvate + UDP-N-acetyl-alpha-D-glucosamine = UDP-N-acetyl-3-O-(1-carboxyvinyl)-alpha-D-glucosamine + phosphate. It functions in the pathway cell wall biogenesis; peptidoglycan biosynthesis. Its function is as follows. Cell wall formation. Adds enolpyruvyl to UDP-N-acetylglucosamine. The polypeptide is UDP-N-acetylglucosamine 1-carboxyvinyltransferase (Trichormus variabilis (strain ATCC 29413 / PCC 7937) (Anabaena variabilis)).